The chain runs to 450 residues: Glucose-6-phosphate isomerase (450 aa).

Position 39 is a phosphothreonine (T39). The active-site Proton donor is E291. Catalysis depends on residues H312 and K426.

The protein belongs to the GPI family.

Its subcellular location is the cytoplasm. It carries out the reaction alpha-D-glucose 6-phosphate = beta-D-fructose 6-phosphate. The protein operates within carbohydrate biosynthesis; gluconeogenesis. It participates in carbohydrate degradation; glycolysis; D-glyceraldehyde 3-phosphate and glycerone phosphate from D-glucose: step 2/4. Functionally, catalyzes the reversible isomerization of glucose-6-phosphate to fructose-6-phosphate. This is Glucose-6-phosphate isomerase from Halalkalibacterium halodurans (strain ATCC BAA-125 / DSM 18197 / FERM 7344 / JCM 9153 / C-125) (Bacillus halodurans).